Here is a 620-residue protein sequence, read N- to C-terminus: 1-deoxy-D-xylulose-5-phosphate synthase (620 aa).

Residues His-80 and 121 to 123 (GHS) each bind thiamine diphosphate. A Mg(2+)-binding site is contributed by Asp-152. Thiamine diphosphate is bound by residues 153 to 154 (GA), Asn-181, Tyr-288, and Glu-370. A Mg(2+)-binding site is contributed by Asn-181.

It belongs to the transketolase family. DXPS subfamily. In terms of assembly, homodimer. Requires Mg(2+) as cofactor. The cofactor is thiamine diphosphate.

The catalysed reaction is D-glyceraldehyde 3-phosphate + pyruvate + H(+) = 1-deoxy-D-xylulose 5-phosphate + CO2. The protein operates within metabolic intermediate biosynthesis; 1-deoxy-D-xylulose 5-phosphate biosynthesis; 1-deoxy-D-xylulose 5-phosphate from D-glyceraldehyde 3-phosphate and pyruvate: step 1/1. Catalyzes the acyloin condensation reaction between C atoms 2 and 3 of pyruvate and glyceraldehyde 3-phosphate to yield 1-deoxy-D-xylulose-5-phosphate (DXP). This Escherichia coli O127:H6 (strain E2348/69 / EPEC) protein is 1-deoxy-D-xylulose-5-phosphate synthase.